Consider the following 590-residue polypeptide: MHRYRSHTCGALRESDIDQTVRVSGWCHRIRDHGGLLFIDLRDHYGLTQCVADPDSPAFKDAEKLRAEWVVRIDGKVRRRPEGTDNNDLPTGQVEIFITEIEVLGPAGELPLPVFGEQEYPEDIRLKYRFLDLRREKLHQNIMTRGAIVDSMRKRMKEQGFFEFQTPILTASSPEGARDFLVPSRIHPGRFYALPQAPQQYKQLLMMSGFDRYFQIAPCFRDEDPRADRLPGEFYQLDVEMSFITQDDVFAAMEPVITGVFEDFAKGKPVTKSWPRIAYADSLKKYGTDKPDLRNPIEMQNVSEHFRGSGFKVFARMLEEERNQVWAIPGPGGGSRAFCDRMNSWAQGEGQPGLGYIMWREGGEGAGPLANNIGPERTAAIREQLGLKAGDAAFFVAGDPSKFVRFAGLARTRLGEELNLVDKERFELAWIVDFPMYEYNEDDKKVDFSHNPFSMPQGGMDALLNQDPLTIKAFQYDITCNGFEIASGGIRNHRPEAMVKAFEIAGYGEQEVVDRFGGMYRAFQYGAPPHGGMAAGVDRIVMLLCGTNNLREISLFPMNQRAEDLLMGAPSDVTPKQLRELHIRLNLPEN.

E175 contributes to the L-aspartate binding site. The tract at residues 199–202 is aspartate; that stretch reads QQYK. 2 residues coordinate L-aspartate: R221 and H450. 221-223 provides a ligand contact to ATP; that stretch reads RDE. Position 484 (E484) interacts with ATP. Position 491 (R491) interacts with L-aspartate. 536–539 is a binding site for ATP; it reads GVDR.

Belongs to the class-II aminoacyl-tRNA synthetase family. Type 1 subfamily. As to quaternary structure, homodimer.

It is found in the cytoplasm. The enzyme catalyses tRNA(Asx) + L-aspartate + ATP = L-aspartyl-tRNA(Asx) + AMP + diphosphate. Its function is as follows. Aspartyl-tRNA synthetase with relaxed tRNA specificity since it is able to aspartylate not only its cognate tRNA(Asp) but also tRNA(Asn). Reaction proceeds in two steps: L-aspartate is first activated by ATP to form Asp-AMP and then transferred to the acceptor end of tRNA(Asp/Asn). The polypeptide is Aspartate--tRNA(Asp/Asn) ligase (Rhodopseudomonas palustris (strain BisB18)).